A 75-amino-acid chain; its full sequence is Putative defensin-like protein 55 (75 aa).

A signal peptide spans methionine 1–serine 19. 4 disulfide bridges follow: cysteine 39-cysteine 73, cysteine 43-cysteine 66, cysteine 52-cysteine 71, and cysteine 56-cysteine 72.

Belongs to the DEFL family.

It localises to the secreted. This chain is Putative defensin-like protein 55, found in Arabidopsis thaliana (Mouse-ear cress).